The sequence spans 281 residues: 3-hydroxyanthranilate 3,4-dioxygenase (281 aa).

The tract at residues 1-162 (MAGVTAIEIP…SNEFKTGKPG (162 aa)) is domain A (catalytic). Arg-45 contacts O2. 3 residues coordinate Fe cation: His-49, Glu-55, and His-93. Glu-55 contacts substrate. Residues Arg-97 and Glu-107 each contribute to the substrate site. The segment at 163 to 179 (KGTFACNAPYEARWTDL) is linker. The interval 180–281 (PVPINRKEFI…GFAITIRMPG (102 aa)) is domain B.

Belongs to the 3-HAO family. Requires Fe(2+) as cofactor.

The protein resides in the cytoplasm. The enzyme catalyses 3-hydroxyanthranilate + O2 = (2Z,4Z)-2-amino-3-carboxymuconate 6-semialdehyde. The protein operates within cofactor biosynthesis; NAD(+) biosynthesis; quinolinate from L-kynurenine: step 3/3. Its function is as follows. Catalyzes the oxidative ring opening of 3-hydroxyanthranilate to 2-amino-3-carboxymuconate semialdehyde, which spontaneously cyclizes to quinolinate. The polypeptide is 3-hydroxyanthranilate 3,4-dioxygenase (haao-1) (Caenorhabditis briggsae).